A 586-amino-acid chain; its full sequence is Ezrin (586 aa).

The FERM domain occupies 2–295; it reads PKPINVRVTT…GNHELYMRRR (294 aa). K60 carries the N6-acetyllysine modification. Positions 115–120 match the [IL]-x-C-x-x-[DE] motif motif; sequence IYCPPE. Position 146 is a phosphotyrosine; by PDGFR (Y146). The interval 244–586 is interaction with SCYL3; sequence EIRNISFNDK…KQRIDEFEAM (343 aa). The stretch at 302 to 462 forms a coiled coil; sequence VQQMKAQARE…QDDLVKTKEE (161 aa). The segment at 306-338 is disordered; it reads KAQAREEKHQKQLERQQLETEKKRRETVEREKE. The span at 308–338 shows a compositional bias: basic and acidic residues; it reads QAREEKHQKQLERQQLETEKKRRETVEREKE. Phosphoserine is present on S366. Y478 is modified (phosphotyrosine). Residue S535 is modified to Phosphoserine. T567 bears the Phosphothreonine; by ROCK2 and PKC/PRKCI mark.

In terms of assembly, interacts with PODXL and NHERF2. Found in a complex with EZR, PODXL and NHERF2. Interacts with PALS1. Interacts with MCC, PLEKHG6, SCYL3/PACE1, NHERF1 and TMEM8B. Interacts (when phosphorylated) with FES/FPS. Interacts with dimeric S100P, the interaction may be activating through unmasking of F-actin binding sites. Identified in complexes that contain VIM, EZR, AHNAK, BFSP1, BFSP2, ANK2, PLEC, PRX and spectrin. Detected in a complex composed of at least EZR, AHNAK, PPL and PRX. Interacts with PDPN (via cytoplasmic domain); activates RHOA and promotes epithelial-mesenchymal transition. Interacts with SPN/CD43 cytoplasmic tail, CD44 and ICAM2. Interacts with SLC9A3; interaction targets SLC9A3 to the apical membrane. Interacts with SLC9A1; regulates interactions of SLC9A1 with cytoskeletal and promotes stress fiber formation. Interacts with CLIC5; may work together in a complex which also includes RDX and MYO6 to stabilize linkages between the plasma membrane and subjacent actin cytoskeleton at the base of stereocilia. Post-translationally, phosphorylated by tyrosine-protein kinases. Phosphorylation by ROCK2 suppresses the head-to-tail association of the N-terminal and C-terminal halves resulting in an opened conformation which is capable of actin and membrane-binding. S-nitrosylation is induced by interferon-gamma and oxidatively-modified low-densitity lipoprotein (LDL(ox)) possibly implicating the iNOS-S100A8/9 transnitrosylase complex. Glomerular epithelium cell (podocyte). Expressed in cerebrum, cerebellum and hippocampus (at protein level). Expressed in the small intestine, lung, kidney and ovaries.

It is found in the apical cell membrane. The protein resides in the cell projection. Its subcellular location is the microvillus membrane. The protein localises to the ruffle membrane. It localises to the cytoplasm. It is found in the cell cortex. The protein resides in the cytoskeleton. Its subcellular location is the microvillus. A head-to-tail association, of the N-terminal and C-terminal halves results in a closed conformation (inactive form) which is incapable of actin or membrane-binding. Probably involved in connections of major cytoskeletal structures to the plasma membrane. In epithelial cells, required for the formation of microvilli and membrane ruffles on the apical pole. Along with PLEKHG6, required for normal macropinocytosis. This Rattus norvegicus (Rat) protein is Ezrin (Ezr).